A 300-amino-acid polypeptide reads, in one-letter code: Phospholipase A1 (300 aa).

Cysteine 4 and cysteine 87 are joined by a disulfide. Serine 137 serves as the catalytic Nucleophile. Aspartate 165 serves as the catalytic Charge relay system. Disulfide bonds link cysteine 176/cysteine 181 and cysteine 218/cysteine 227. The active-site Charge relay system is histidine 229. 3 disulfides stabilise this stretch: cysteine 244–cysteine 268, cysteine 245–cysteine 293, and cysteine 261–cysteine 266.

The protein belongs to the AB hydrolase superfamily. Lipase family. As to expression, expressed by the venom gland.

It localises to the secreted. It carries out the reaction a 1,2-diacyl-sn-glycero-3-phosphocholine + H2O = a 2-acyl-sn-glycero-3-phosphocholine + a fatty acid + H(+). With respect to regulation, local inflammatory effects are inhibited by antiserotonin drugs (cyproheptadine and methysergide), indomethacin, betamethasone, and antihistamine (chlorpheniramine). In terms of biological role, catalyzes the hydrolysis of phosphatidylcholine with phospholipase A1 activity. Shows potent hemolytic activity that is responsible for its lethal effect. May act as an allergen. In vivo, induces local inflammatory effects. The chain is Phospholipase A1 from Vespa basalis (Hornet).